Here is a 329-residue protein sequence, read N- to C-terminus: DNA-directed RNA polymerase subunit alpha (329 aa).

The segment at 1-235 (MQGSVTEFLK…EQLEAFVDLR (235 aa)) is alpha N-terminal domain (alpha-NTD). The interval 249–329 (FDPILLRPVD…NWPPASIADE (81 aa)) is alpha C-terminal domain (alpha-CTD).

The protein belongs to the RNA polymerase alpha chain family. As to quaternary structure, homodimer. The RNAP catalytic core consists of 2 alpha, 1 beta, 1 beta' and 1 omega subunit. When a sigma factor is associated with the core the holoenzyme is formed, which can initiate transcription.

The enzyme catalyses RNA(n) + a ribonucleoside 5'-triphosphate = RNA(n+1) + diphosphate. DNA-dependent RNA polymerase catalyzes the transcription of DNA into RNA using the four ribonucleoside triphosphates as substrates. This Yersinia pestis bv. Antiqua (strain Antiqua) protein is DNA-directed RNA polymerase subunit alpha.